Here is a 62-residue protein sequence, read N- to C-terminus: UPF0434 protein BP2767 (62 aa).

This sequence belongs to the UPF0434 family.

In Bordetella pertussis (strain Tohama I / ATCC BAA-589 / NCTC 13251), this protein is UPF0434 protein BP2767.